The primary structure comprises 100 residues: NADH-quinone oxidoreductase subunit K 2 (100 aa).

A run of 3 helical transmembrane segments spans residues 4–24, 29–49, and 60–80; these read LHSY…GVLI, IVIF…FIAL, and IFVF…LALM.

It belongs to the complex I subunit 4L family. NDH-1 is composed of 14 different subunits. Subunits NuoA, H, J, K, L, M, N constitute the membrane sector of the complex.

Its subcellular location is the cell inner membrane. The enzyme catalyses a quinone + NADH + 5 H(+)(in) = a quinol + NAD(+) + 4 H(+)(out). Its function is as follows. NDH-1 shuttles electrons from NADH, via FMN and iron-sulfur (Fe-S) centers, to quinones in the respiratory chain. The immediate electron acceptor for the enzyme in this species is believed to be ubiquinone. Couples the redox reaction to proton translocation (for every two electrons transferred, four hydrogen ions are translocated across the cytoplasmic membrane), and thus conserves the redox energy in a proton gradient. This chain is NADH-quinone oxidoreductase subunit K 2, found in Geobacter metallireducens (strain ATCC 53774 / DSM 7210 / GS-15).